A 103-amino-acid polypeptide reads, in one-letter code: uncharacterized protein (103 aa).

It is found in the plastid. It localises to the chloroplast. This is an uncharacterized protein from Auxenochlorella pyrenoidosa (Freshwater green alga).